Here is a 292-residue protein sequence, read N- to C-terminus: Elongation factor Ts (292 aa).

Positions 79–82 are involved in Mg(2+) ion dislocation from EF-Tu; that stretch reads TDFV.

This sequence belongs to the EF-Ts family.

It is found in the cytoplasm. Associates with the EF-Tu.GDP complex and induces the exchange of GDP to GTP. It remains bound to the aminoacyl-tRNA.EF-Tu.GTP complex up to the GTP hydrolysis stage on the ribosome. In Metamycoplasma arthritidis (strain 158L3-1) (Mycoplasma arthritidis), this protein is Elongation factor Ts.